Reading from the N-terminus, the 545-residue chain is Capsular polysaccharide phosphotransferase SacB (545 aa).

This sequence belongs to the stealth family.

Its function is as follows. Part of a capsular biosynthesis operon and has been suggested to be the polymerase that links individual UDP-N-acetyl-D-mannosamine monomers. In serotype A the capsule is composed of repeated units of (alpha 1-6)-linked N-acetyl-D-mannosamine-1-phosphate. Non-polar disruption of this open reading frame prevented capsule synthesis. The chain is Capsular polysaccharide phosphotransferase SacB (sacB) from Neisseria meningitidis serogroup A.